We begin with the raw amino-acid sequence, 417 residues long: NADH-quinone oxidoreductase subunit D (417 aa).

It belongs to the complex I 49 kDa subunit family. In terms of assembly, NDH-1 is composed of 14 different subunits. Subunits NuoB, C, D, E, F, and G constitute the peripheral sector of the complex.

The protein resides in the cell inner membrane. The enzyme catalyses a quinone + NADH + 5 H(+)(in) = a quinol + NAD(+) + 4 H(+)(out). In terms of biological role, NDH-1 shuttles electrons from NADH, via FMN and iron-sulfur (Fe-S) centers, to quinones in the respiratory chain. The immediate electron acceptor for the enzyme in this species is believed to be ubiquinone. Couples the redox reaction to proton translocation (for every two electrons transferred, four hydrogen ions are translocated across the cytoplasmic membrane), and thus conserves the redox energy in a proton gradient. This chain is NADH-quinone oxidoreductase subunit D, found in Methylibium petroleiphilum (strain ATCC BAA-1232 / LMG 22953 / PM1).